Consider the following 507-residue polypeptide: ATP synthase subunit alpha, chloroplastic (507 aa).

170 to 177 (GDRQTGKT) lines the ATP pocket. A Phosphoserine modification is found at S383.

The protein belongs to the ATPase alpha/beta chains family. In terms of assembly, F-type ATPases have 2 components, CF(1) - the catalytic core - and CF(0) - the membrane proton channel. CF(1) has five subunits: alpha(3), beta(3), gamma(1), delta(1), epsilon(1). CF(0) has four main subunits: a, b, b' and c. Post-translationally, only phosphorylated in mesophyll cells, and only when cells are grown under high rather than low light regimes (70 vs 900 umol photons/m-2/s).

The protein resides in the plastid. Its subcellular location is the chloroplast thylakoid membrane. It carries out the reaction ATP + H2O + 4 H(+)(in) = ADP + phosphate + 5 H(+)(out). In terms of biological role, produces ATP from ADP in the presence of a proton gradient across the membrane. The alpha chain is a regulatory subunit. This is ATP synthase subunit alpha, chloroplastic from Zea mays (Maize).